Reading from the N-terminus, the 380-residue chain is Aminomethyltransferase (380 aa).

Belongs to the GcvT family. As to quaternary structure, the glycine cleavage system is composed of four proteins: P, T, L and H.

It carries out the reaction N(6)-[(R)-S(8)-aminomethyldihydrolipoyl]-L-lysyl-[protein] + (6S)-5,6,7,8-tetrahydrofolate = N(6)-[(R)-dihydrolipoyl]-L-lysyl-[protein] + (6R)-5,10-methylene-5,6,7,8-tetrahydrofolate + NH4(+). The glycine cleavage system catalyzes the degradation of glycine. This Koribacter versatilis (strain Ellin345) protein is Aminomethyltransferase.